The chain runs to 509 residues: Maturase K (509 aa).

Belongs to the intron maturase 2 family. MatK subfamily.

The protein resides in the plastid. It is found in the chloroplast. In terms of biological role, usually encoded in the trnK tRNA gene intron. Probably assists in splicing its own and other chloroplast group II introns. The chain is Maturase K from Drimys granadensis.